The sequence spans 165 residues: Cyanate hydratase (165 aa).

Residues 1–20 (MAQNKANTVSQLQSLKNKSG) form a disordered region. Residues Arg-90, Glu-93, and Ser-116 contribute to the active site.

The protein belongs to the cyanase family.

It catalyses the reaction cyanate + hydrogencarbonate + 3 H(+) = NH4(+) + 2 CO2. Catalyzes the reaction of cyanate with bicarbonate to produce ammonia and carbon dioxide. In Medicago truncatula (Barrel medic), this protein is Cyanate hydratase.